The following is a 521-amino-acid chain: Maturase K (521 aa).

This sequence belongs to the intron maturase 2 family. MatK subfamily.

The protein resides in the plastid. It localises to the chloroplast. Usually encoded in the trnK tRNA gene intron. Probably assists in splicing its own and other chloroplast group II introns. The protein is Maturase K of Anthericum liliago (St-Bernard's lily).